Reading from the N-terminus, the 356-residue chain is Cyanide hydratase (356 aa).

Residues 6-285 (YKAAAVTSEP…DGLLFVDIDL (280 aa)) enclose the CN hydrolase domain. The active-site Proton acceptor is E46. Residue K128 is part of the active site. C163 (nucleophile) is an active-site residue.

This sequence belongs to the carbon-nitrogen hydrolase superfamily. Nitrilase family. In terms of assembly, oligomer of dimers, forming left-handed helical fibers.

It carries out the reaction formamide = hydrogen cyanide + H2O. In terms of biological role, catalyzes the hydration of cyanide to formamide. Degradation of cyanide may be important for plant pathogenic fungi in infection of cyanogenic plants. The polypeptide is Cyanide hydratase (Leptosphaeria maculans (Blackleg fungus)).